The primary structure comprises 456 residues: Signal recognition particle receptor FtsY (456 aa).

Positions 1-26 are enriched in basic and acidic residues; that stretch reads MFDGLKKKLNRFRNDVEETAEEKAEA. The tract at residues 1–163 is disordered; the sequence is MFDGLKKKLN…DEDDSSGPGR (163 aa). Over residues 27–39 the composition is skewed to acidic residues; it reads AADEAESDADAEA. The span at 40-62 shows a compositional bias: low complexity; that stretch reads ESAPADTDNAAVEPEASEPAAAD. The span at 63-81 shows a compositional bias: acidic residues; it reads PDADAVGDADAGSEADAVD. Low complexity predominate over residues 82–97; the sequence is AADAPADAESSSAAVE. Residues 112 to 134 are compositionally biased toward acidic residues; it reads PDSEVDAGADTGDEPSGEPTADE. GTP is bound by residues 265–272, 347–351, and 405–408; these read GINGVGKT, DTAGR, and TKAD.

This sequence belongs to the GTP-binding SRP family. FtsY subfamily. Part of the signal recognition particle protein translocation system, which is composed of SRP and FtsY.

It localises to the cell membrane. The protein localises to the cytoplasm. The catalysed reaction is GTP + H2O = GDP + phosphate + H(+). Involved in targeting and insertion of nascent membrane proteins into the cytoplasmic membrane. Acts as a receptor for the complex formed by the signal recognition particle (SRP) and the ribosome-nascent chain (RNC). The chain is Signal recognition particle receptor FtsY from Haloferax volcanii (strain ATCC 29605 / DSM 3757 / JCM 8879 / NBRC 14742 / NCIMB 2012 / VKM B-1768 / DS2) (Halobacterium volcanii).